The sequence spans 663 residues: UvrABC system protein B (663 aa).

The Helicase ATP-binding domain maps to 26-183 (DGLESGLAKQ…KRLAEMQYTR (158 aa)). Residue 39–46 (GVTGSGKT) coordinates ATP. A Beta-hairpin motif is present at residues 92 to 115 (YYDYYQPEAYVPASDTFIEKDASI). The region spanning 430 to 596 (QVDDLMSEIR…GINKSVEDIL (167 aa)) is the Helicase C-terminal domain. The UVR domain maps to 624–659 (AKQINALEKQMYAHAQNMEFELAAKIRDEYLLLKEQ).

This sequence belongs to the UvrB family. Forms a heterotetramer with UvrA during the search for lesions. Interacts with UvrC in an incision complex.

Its subcellular location is the cytoplasm. The UvrABC repair system catalyzes the recognition and processing of DNA lesions. A damage recognition complex composed of 2 UvrA and 2 UvrB subunits scans DNA for abnormalities. Upon binding of the UvrA(2)B(2) complex to a putative damaged site, the DNA wraps around one UvrB monomer. DNA wrap is dependent on ATP binding by UvrB and probably causes local melting of the DNA helix, facilitating insertion of UvrB beta-hairpin between the DNA strands. Then UvrB probes one DNA strand for the presence of a lesion. If a lesion is found the UvrA subunits dissociate and the UvrB-DNA preincision complex is formed. This complex is subsequently bound by UvrC and the second UvrB is released. If no lesion is found, the DNA wraps around the other UvrB subunit that will check the other stand for damage. This chain is UvrABC system protein B, found in Legionella pneumophila (strain Corby).